We begin with the raw amino-acid sequence, 178 residues long: MTLKTRYKEAIRPKLLKDLGLKNIHQVPKVIKVNVNRGLGEAASNSKALEASLNEMATITGQKALVTRSKKAIAGFKIREGMAIGCTVTLRGDRMYSFLERFINLALPRIRDFRGVNPKSFDGRGNYTLGVKEQLIFPEISFDKIDSIRGMDITIVTSASTDQEGKALLKELGMPFSN.

This sequence belongs to the universal ribosomal protein uL5 family. Part of the 50S ribosomal subunit; part of the 5S rRNA/L5/L18/L25 subcomplex. Contacts the 5S rRNA and the P site tRNA. Forms a bridge to the 30S subunit in the 70S ribosome.

Its function is as follows. This is one of the proteins that bind and probably mediate the attachment of the 5S RNA into the large ribosomal subunit, where it forms part of the central protuberance. In the 70S ribosome it contacts protein S13 of the 30S subunit (bridge B1b), connecting the 2 subunits; this bridge is implicated in subunit movement. Contacts the P site tRNA; the 5S rRNA and some of its associated proteins might help stabilize positioning of ribosome-bound tRNAs. This is Large ribosomal subunit protein uL5 from Prochlorococcus marinus subsp. pastoris (strain CCMP1986 / NIES-2087 / MED4).